The primary structure comprises 344 residues: Phenylalanine--tRNA ligase alpha subunit (344 aa).

Glutamate 255 lines the Mg(2+) pocket.

It belongs to the class-II aminoacyl-tRNA synthetase family. Phe-tRNA synthetase alpha subunit type 1 subfamily. In terms of assembly, tetramer of two alpha and two beta subunits. The cofactor is Mg(2+).

Its subcellular location is the cytoplasm. The enzyme catalyses tRNA(Phe) + L-phenylalanine + ATP = L-phenylalanyl-tRNA(Phe) + AMP + diphosphate + H(+). The polypeptide is Phenylalanine--tRNA ligase alpha subunit (Sulfurihydrogenibium sp. (strain YO3AOP1)).